A 201-amino-acid chain; its full sequence is Thylakoid membrane protein slr1796 (201 aa).

The helical transmembrane segment at 16-36 (FLIVSLAFAMLLLGIWGTLPF) threads the bilayer.

Its subcellular location is the cellular thylakoid membrane. The polypeptide is Thylakoid membrane protein slr1796 (Synechocystis sp. (strain ATCC 27184 / PCC 6803 / Kazusa)).